The following is a 435-amino-acid chain: GTPase Der (435 aa).

EngA-type G domains lie at 8–169 and 176–351; these read NLVA…NFEN and FKIA…NNLS. GTP-binding positions include 14-21, 61-65, 123-126, 182-189, 229-233, and 294-297; these read GKPNVGKS, DTGGI, NKLD, GKPNAGKS, DTAGI, and NKWD. Residues 352-435 enclose the KH-like domain; the sequence is REIKQNLLND…PINLVLKKNK (84 aa).

It belongs to the TRAFAC class TrmE-Era-EngA-EngB-Septin-like GTPase superfamily. EngA (Der) GTPase family. Associates with the 50S ribosomal subunit.

GTPase that plays an essential role in the late steps of ribosome biogenesis. The protein is GTPase Der of Mycoplasmopsis pulmonis (strain UAB CTIP) (Mycoplasma pulmonis).